The chain runs to 250 residues: MTPDEPKETHFGFRTVAEKDKAGLVHGVFSRVASRYDVMNDLMSGGVHRIWKTAMMDWLAPRDGQHLLDVAGGTGDIAFRFLDRAPGARVTVCDMTESMLVEGRKRAEAGKQADRLAWVTGDAMALPFADDSFDRYTISFGIRNVTRIPDALAEARRVLRPGGRLMVLEFSQMPVPMLQWLYDRYSFNVIPVMGQIVANDRDSYQYLVESIRKFPDQETFATMIREAGFGRVQWRNLSMGIAALHSGWKL.

S-adenosyl-L-methionine is bound by residues threonine 74, aspartate 94, aspartate 122–alanine 123, and serine 139.

The protein belongs to the class I-like SAM-binding methyltransferase superfamily. MenG/UbiE family.

The catalysed reaction is a 2-demethylmenaquinol + S-adenosyl-L-methionine = a menaquinol + S-adenosyl-L-homocysteine + H(+). It carries out the reaction a 2-methoxy-6-(all-trans-polyprenyl)benzene-1,4-diol + S-adenosyl-L-methionine = a 5-methoxy-2-methyl-3-(all-trans-polyprenyl)benzene-1,4-diol + S-adenosyl-L-homocysteine + H(+). It functions in the pathway quinol/quinone metabolism; menaquinone biosynthesis; menaquinol from 1,4-dihydroxy-2-naphthoate: step 2/2. Its pathway is cofactor biosynthesis; ubiquinone biosynthesis. In terms of biological role, methyltransferase required for the conversion of demethylmenaquinol (DMKH2) to menaquinol (MKH2) and the conversion of 2-polyprenyl-6-methoxy-1,4-benzoquinol (DDMQH2) to 2-polyprenyl-3-methyl-6-methoxy-1,4-benzoquinol (DMQH2). In Paracoccus denitrificans (strain Pd 1222), this protein is Ubiquinone/menaquinone biosynthesis C-methyltransferase UbiE.